The primary structure comprises 209 residues: Uracil phosphoribosyltransferase (209 aa).

5-phospho-alpha-D-ribose 1-diphosphate-binding positions include Arg-79, Arg-104, and 131–139 (DPMLATGNS). Uracil is bound by residues Ile-194 and 199–201 (GDA). 5-phospho-alpha-D-ribose 1-diphosphate is bound at residue Asp-200.

The protein belongs to the UPRTase family. It depends on Mg(2+) as a cofactor.

The enzyme catalyses UMP + diphosphate = 5-phospho-alpha-D-ribose 1-diphosphate + uracil. It functions in the pathway pyrimidine metabolism; UMP biosynthesis via salvage pathway; UMP from uracil: step 1/1. Allosterically activated by GTP. Catalyzes the conversion of uracil and 5-phospho-alpha-D-ribose 1-diphosphate (PRPP) to UMP and diphosphate. The chain is Uracil phosphoribosyltransferase from Variovorax paradoxus (strain S110).